The following is a 189-amino-acid chain: Probable nicotinate-nucleotide adenylyltransferase (189 aa).

This sequence belongs to the NadD family.

It carries out the reaction nicotinate beta-D-ribonucleotide + ATP + H(+) = deamido-NAD(+) + diphosphate. It participates in cofactor biosynthesis; NAD(+) biosynthesis; deamido-NAD(+) from nicotinate D-ribonucleotide: step 1/1. In terms of biological role, catalyzes the reversible adenylation of nicotinate mononucleotide (NaMN) to nicotinic acid adenine dinucleotide (NaAD). In Bacillus licheniformis (strain ATCC 14580 / DSM 13 / JCM 2505 / CCUG 7422 / NBRC 12200 / NCIMB 9375 / NCTC 10341 / NRRL NRS-1264 / Gibson 46), this protein is Probable nicotinate-nucleotide adenylyltransferase.